The primary structure comprises 333 residues: Glyceraldehyde-3-phosphate dehydrogenase (333 aa).

Residue Ser-1 is modified to N-acetylserine. NAD(+) contacts are provided by residues 10–11, Asp-31, and Ser-118; that span reads RI. Residues 147–149, Thr-178, 207–208, and Arg-230 contribute to the D-glyceraldehyde 3-phosphate site; these read SCT and TG. Cys-148 serves as the catalytic Nucleophile. An NAD(+)-binding site is contributed by Asn-312.

It belongs to the glyceraldehyde-3-phosphate dehydrogenase family. As to quaternary structure, homotetramer.

The protein resides in the cytoplasm. The catalysed reaction is D-glyceraldehyde 3-phosphate + phosphate + NAD(+) = (2R)-3-phospho-glyceroyl phosphate + NADH + H(+). It functions in the pathway carbohydrate degradation; glycolysis; pyruvate from D-glyceraldehyde 3-phosphate: step 1/5. This Homarus americanus (American lobster) protein is Glyceraldehyde-3-phosphate dehydrogenase.